A 253-amino-acid polypeptide reads, in one-letter code: 5'-nucleotidase SurE (253 aa).

Positions 8, 9, 39, and 92 each coordinate a divalent metal cation.

It belongs to the SurE nucleotidase family. Requires a divalent metal cation as cofactor.

It is found in the cytoplasm. It carries out the reaction a ribonucleoside 5'-phosphate + H2O = a ribonucleoside + phosphate. Its function is as follows. Nucleotidase that shows phosphatase activity on nucleoside 5'-monophosphates. This Burkholderia thailandensis (strain ATCC 700388 / DSM 13276 / CCUG 48851 / CIP 106301 / E264) protein is 5'-nucleotidase SurE.